A 245-amino-acid polypeptide reads, in one-letter code: MIIPALDLIDGTVVRLHQGDYARQRDYGNDPLPRLRDYAAQGAEVLHLVDLTGAKDPARRQIPLIKTLVAGVNVPVQVGGGVRTEDDVAALLDAGVARVVVGSTAVKSPEVVKGWFERFGADALVLALDVRIDDRGNKQVAVSGWQENSGVSLEELVETYLPVGLKHVLCTDISRDGTLAGSNVSLYDEVCAKYPQVAFQSSGGIGGIEDVAALRGTGVRGVIVGRALLEGKFTVKEAIQCWQNV.

D7 serves as the catalytic Proton acceptor. D129 acts as the Proton donor in catalysis.

This sequence belongs to the HisA/HisF family.

The protein resides in the cytoplasm. The catalysed reaction is 1-(5-phospho-beta-D-ribosyl)-5-[(5-phospho-beta-D-ribosylamino)methylideneamino]imidazole-4-carboxamide = 5-[(5-phospho-1-deoxy-D-ribulos-1-ylimino)methylamino]-1-(5-phospho-beta-D-ribosyl)imidazole-4-carboxamide. It participates in amino-acid biosynthesis; L-histidine biosynthesis; L-histidine from 5-phospho-alpha-D-ribose 1-diphosphate: step 4/9. This chain is 1-(5-phosphoribosyl)-5-[(5-phosphoribosylamino)methylideneamino] imidazole-4-carboxamide isomerase, found in Citrobacter koseri (strain ATCC BAA-895 / CDC 4225-83 / SGSC4696).